We begin with the raw amino-acid sequence, 122 residues long: Large ribosomal subunit protein uL14 (122 aa).

The protein belongs to the universal ribosomal protein uL14 family. Part of the 50S ribosomal subunit. Forms a cluster with proteins L3 and L19. In the 70S ribosome, L14 and L19 interact and together make contacts with the 16S rRNA in bridges B5 and B8.

Its function is as follows. Binds to 23S rRNA. Forms part of two intersubunit bridges in the 70S ribosome. The polypeptide is Large ribosomal subunit protein uL14 (Brucella abortus (strain 2308)).